We begin with the raw amino-acid sequence, 255 residues long: Taurine import ATP-binding protein TauB (255 aa).

In terms of domain architecture, ABC transporter spans 2-229; it reads LQISHLYADY…RFVAGESSRS (228 aa). 34–41 contacts ATP; sequence GPSGCGKT.

It belongs to the ABC transporter superfamily. Taurine importer (TC 3.A.1.17.1) family. In terms of assembly, the complex is composed of two ATP-binding proteins (TauB), two transmembrane proteins (TauC) and a solute-binding protein (TauA).

It localises to the cell inner membrane. The enzyme catalyses taurine(out) + ATP + H2O = taurine(in) + ADP + phosphate + H(+). In terms of biological role, part of the ABC transporter complex TauABC involved in taurine import. Responsible for energy coupling to the transport system. The sequence is that of Taurine import ATP-binding protein TauB from Escherichia coli O157:H7.